The chain runs to 382 residues: Succinyl-diaminopimelate desuccinylase (382 aa).

A Zn(2+)-binding site is contributed by His-72. Residue Asp-74 is part of the active site. Zn(2+) is bound at residue Asp-105. Glu-139 acts as the Proton acceptor in catalysis. Zn(2+) is bound by residues Glu-140, Glu-168, and His-354.

This sequence belongs to the peptidase M20A family. DapE subfamily. Homodimer. Zn(2+) is required as a cofactor. Requires Co(2+) as cofactor.

The catalysed reaction is N-succinyl-(2S,6S)-2,6-diaminopimelate + H2O = (2S,6S)-2,6-diaminopimelate + succinate. The protein operates within amino-acid biosynthesis; L-lysine biosynthesis via DAP pathway; LL-2,6-diaminopimelate from (S)-tetrahydrodipicolinate (succinylase route): step 3/3. Its function is as follows. Catalyzes the hydrolysis of N-succinyl-L,L-diaminopimelic acid (SDAP), forming succinate and LL-2,6-diaminopimelate (DAP), an intermediate involved in the bacterial biosynthesis of lysine and meso-diaminopimelic acid, an essential component of bacterial cell walls. This chain is Succinyl-diaminopimelate desuccinylase, found in Shewanella amazonensis (strain ATCC BAA-1098 / SB2B).